A 619-amino-acid chain; its full sequence is 2-isopropylmalate synthase (619 aa).

A Pyruvate carboxyltransferase domain is found at 61-336; the sequence is PRWLSTDLRD…SPNLDFSDLT (276 aa). The a divalent metal cation site is built by D70, H275, H277, and N311.

It belongs to the alpha-IPM synthase/homocitrate synthase family. LeuA type 2 subfamily. Homodimer. A divalent metal cation is required as a cofactor.

It localises to the cytoplasm. The protein localises to the mitochondrion. The catalysed reaction is 3-methyl-2-oxobutanoate + acetyl-CoA + H2O = (2S)-2-isopropylmalate + CoA + H(+). It functions in the pathway amino-acid biosynthesis; L-leucine biosynthesis; L-leucine from 3-methyl-2-oxobutanoate: step 1/4. Catalyzes the condensation of the acetyl group of acetyl-CoA with 3-methyl-2-oxobutanoate (2-oxoisovalerate) to form 3-carboxy-3-hydroxy-4-methylpentanoate (2-isopropylmalate). The protein is 2-isopropylmalate synthase (LEU4) of Saccharomyces cerevisiae (strain ATCC 204508 / S288c) (Baker's yeast).